A 614-amino-acid chain; its full sequence is UvrABC system protein C (614 aa).

Residues 14-91 enclose the GIY-YIG domain; that stretch reads TSPGCYIHKD…IKENKPKYNI (78 aa). Residues 196-231 form the UVR domain; sequence DKIIDDLKSKMAVAAQSMEFERAAEYRDLIQAIGTL. The interval 595–614 is disordered; the sequence is LPQVAEERVDYQTEGNHNEP. Residues 599–614 show a composition bias toward basic and acidic residues; it reads AEERVDYQTEGNHNEP.

This sequence belongs to the UvrC family. In terms of assembly, interacts with UvrB in an incision complex.

It localises to the cytoplasm. The UvrABC repair system catalyzes the recognition and processing of DNA lesions. UvrC both incises the 5' and 3' sides of the lesion. The N-terminal half is responsible for the 3' incision and the C-terminal half is responsible for the 5' incision. The protein is UvrABC system protein C of Streptococcus pneumoniae serotype 4 (strain ATCC BAA-334 / TIGR4).